The following is a 136-amino-acid chain: Methylglyoxal synthase (136 aa).

The 136-residue stretch at 1–136 (MKIALIAHDR…REVVREENEA (136 aa)) folds into the MGS-like domain. Substrate contacts are provided by residues H8, K12, 34–37 (TGTT), and 54–55 (SG). The Proton donor/acceptor role is filled by D60. A substrate-binding site is contributed by H87.

The protein belongs to the methylglyoxal synthase family.

It carries out the reaction dihydroxyacetone phosphate = methylglyoxal + phosphate. Functionally, catalyzes the formation of methylglyoxal from dihydroxyacetone phosphate. The sequence is that of Methylglyoxal synthase from Brevibacillus brevis (strain 47 / JCM 6285 / NBRC 100599).